Here is a 79-residue protein sequence, read N- to C-terminus: Small ribosomal subunit protein bS16c (79 aa).

Belongs to the bacterial ribosomal protein bS16 family.

It is found in the plastid. It localises to the chloroplast. The sequence is that of Small ribosomal subunit protein bS16c from Thalassiosira pseudonana (Marine diatom).